The sequence spans 315 residues: Ribosomal RNA small subunit methyltransferase H (315 aa).

Residues 35 to 37 (GGH), D55, F80, D102, and Q109 contribute to the S-adenosyl-L-methionine site.

The protein belongs to the methyltransferase superfamily. RsmH family.

It localises to the cytoplasm. It catalyses the reaction cytidine(1402) in 16S rRNA + S-adenosyl-L-methionine = N(4)-methylcytidine(1402) in 16S rRNA + S-adenosyl-L-homocysteine + H(+). Functionally, specifically methylates the N4 position of cytidine in position 1402 (C1402) of 16S rRNA. The polypeptide is Ribosomal RNA small subunit methyltransferase H (Shewanella pealeana (strain ATCC 700345 / ANG-SQ1)).